We begin with the raw amino-acid sequence, 281 residues long: Ribosomal RNA small subunit methyltransferase A (281 aa).

S-adenosyl-L-methionine-binding residues include asparagine 25, leucine 27, glycine 52, glutamate 73, aspartate 99, and asparagine 118.

This sequence belongs to the class I-like SAM-binding methyltransferase superfamily. rRNA adenine N(6)-methyltransferase family. RsmA subfamily.

Its subcellular location is the cytoplasm. The enzyme catalyses adenosine(1518)/adenosine(1519) in 16S rRNA + 4 S-adenosyl-L-methionine = N(6)-dimethyladenosine(1518)/N(6)-dimethyladenosine(1519) in 16S rRNA + 4 S-adenosyl-L-homocysteine + 4 H(+). Its function is as follows. Specifically dimethylates two adjacent adenosines (A1518 and A1519) in the loop of a conserved hairpin near the 3'-end of 16S rRNA in the 30S particle. May play a critical role in biogenesis of 30S subunits. The polypeptide is Ribosomal RNA small subunit methyltransferase A (Erythrobacter litoralis (strain HTCC2594)).